A 291-amino-acid polypeptide reads, in one-letter code: Nucleotide-binding protein LGAS_1315 (291 aa).

13–20 serves as a coordination point for ATP; sequence GMSGAGKT. Residue 63–66 coordinates GTP; that stretch reads DLRV.

Belongs to the RapZ-like family.

Displays ATPase and GTPase activities. The protein is Nucleotide-binding protein LGAS_1315 of Lactobacillus gasseri (strain ATCC 33323 / DSM 20243 / BCRC 14619 / CIP 102991 / JCM 1131 / KCTC 3163 / NCIMB 11718 / NCTC 13722 / AM63).